The following is a 66-amino-acid chain: Large ribosomal subunit protein eL24 (66 aa).

4 residues coordinate Zn(2+): Cys-6, Cys-9, Cys-32, and Cys-36. The segment at 6–36 (CSFCGKSIEPASGFLYVRKDGSVLNFCSRKC) adopts a C4-type zinc-finger fold.

The protein belongs to the eukaryotic ribosomal protein eL24 family. Part of the 50S ribosomal subunit. Forms a cluster with proteins L3 and L14. Requires Zn(2+) as cofactor.

Its function is as follows. Binds to the 23S rRNA. The protein is Large ribosomal subunit protein eL24 of Picrophilus torridus (strain ATCC 700027 / DSM 9790 / JCM 10055 / NBRC 100828 / KAW 2/3).